Consider the following 1049-residue polypeptide: Self-sufficient cytochrome P450 monooxygenase CYP505E4 (1049 aa).

Residue C405 participates in heme binding. Residues 461–470 (SATALSQHNM) show a composition bias toward polar residues. The segment at 461–491 (SATALSQHNMSAGATASPGSSTHLAGDENGQ) is disordered. Low complexity predominate over residues 471 to 482 (SAGATASPGSST). One can recognise a Flavodoxin-like domain in the interval 499-640 (ISFFYGSNSG…DLEVWEETNL (142 aa)). Residues 505-509 (SNSGT) and 584-616 (VFGCGHQDWTKTFYRIPILIDDLMHKAGATRLT) each bind FMN. An FAD-binding FR-type domain is found at 678–906 (RDLVEGKVTA…RPAKDAFHLP (229 aa)).

This sequence in the N-terminal section; belongs to the cytochrome P450 family. FAD serves as cofactor. It depends on FMN as a cofactor. Heme is required as a cofactor.

It catalyses the reaction 2 oxidized [cytochrome P450] + NADPH = 2 reduced [cytochrome P450] + NADP(+) + H(+). The catalysed reaction is an organic molecule + reduced [NADPH--hemoprotein reductase] + O2 = an alcohol + oxidized [NADPH--hemoprotein reductase] + H2O + H(+). It carries out the reaction dodecanoate + reduced [NADPH--hemoprotein reductase] + O2 = 5-hydroxydodecanoate + oxidized [NADPH--hemoprotein reductase] + H2O + H(+). The enzyme catalyses dodecan-1-ol + reduced [NADPH--hemoprotein reductase] + O2 = 1,5-dodecanediol + oxidized [NADPH--hemoprotein reductase] + H2O + H(+). It catalyses the reaction dodecanoate + reduced [NADPH--hemoprotein reductase] + O2 = 9-hydroxydodecanoate + oxidized [NADPH--hemoprotein reductase] + H2O + H(+). The catalysed reaction is dodecan-1-ol + reduced [NADPH--hemoprotein reductase] + O2 = 1,4-dodecanediol + oxidized [NADPH--hemoprotein reductase] + H2O + H(+). It carries out the reaction dodecan-1-ol + reduced [NADPH--hemoprotein reductase] + O2 = 1,6-dodecanediol + oxidized [NADPH--hemoprotein reductase] + H2O + H(+). Functionally, self-sufficient cytochrome P450 monooxygenase that catalyzes the regioselective in-chain hydroxylation of alkanes, fatty alcohols, and fatty acids at the omega-7 position. Performs hydroxylation of C10-C16 n-alkanes and C12 and C14 fatty alcohols; and thereby enables the one step biocatalytic synthesis of rare alcohols such as 5-dodecanol and 7-tetradecanol. Converts 1-dodecanol into 1,5-dodecanediol as major product with very little sub-terminally hydroxylated products with the 1,4-dodecanediol and 1,6-dodecanediol more abundant. Converts dodecanoic acid to 5-hydroxydodecanoic acid which can be further converted into delta-dodecalactone by lactonization of the 5-hydroxy acid at low pH. Also gives sub-terminal hydroxylation of dodecanoic acid with 9-hydroxydodecanoic acid being the second most abundant product. Does not show any significant activity toward tetradecanoic acid. The protein is Self-sufficient cytochrome P450 monooxygenase CYP505E4 of Penicillium camemberti (strain FM 013).